The primary structure comprises 246 residues: E3 ubiquitin-protein ligase MARCHF2 (246 aa).

The RING-CH-type zinc-finger motif lies at Gly56 to Glu116. Zn(2+)-binding residues include Cys64, Cys67, Cys80, Cys82, His90, Cys93, Cys106, and Cys109. 2 helical membrane passes run Leu138 to Leu158 and Ala175 to Val195.

The protein resides in the endoplasmic reticulum membrane. The protein localises to the lysosome membrane. It is found in the endosome membrane. The enzyme catalyses S-ubiquitinyl-[E2 ubiquitin-conjugating enzyme]-L-cysteine + [acceptor protein]-L-lysine = [E2 ubiquitin-conjugating enzyme]-L-cysteine + N(6)-ubiquitinyl-[acceptor protein]-L-lysine.. It functions in the pathway protein modification; protein ubiquitination. Its function is as follows. E3 ubiquitin-protein ligase which may be involved in endosomal trafficking. E3 ubiquitin ligases accept ubiquitin from an E2 ubiquitin-conjugating enzyme in the form of a thioester and then directly transfer the ubiquitin to targeted substrates. This Xenopus laevis (African clawed frog) protein is E3 ubiquitin-protein ligase MARCHF2 (marchf2).